The chain runs to 506 residues: Galactose/methyl galactoside import ATP-binding protein MglA (506 aa).

ABC transporter domains are found at residues 14–249 (LEMS…VGRS) and 264–506 (VILE…SLHL). ATP is bound at residue 46–53 (GENGAGKS).

It belongs to the ABC transporter superfamily. Galactose/methyl galactoside importer (TC 3.A.1.2.3) family. As to quaternary structure, the complex is composed of one ATP-binding protein (MglA), two transmembrane proteins (MglC) and a solute-binding protein (MglB).

It is found in the cell inner membrane. The catalysed reaction is D-galactose(out) + ATP + H2O = D-galactose(in) + ADP + phosphate + H(+). It catalyses the reaction methyl beta-D-galactoside(out) + ATP + H2O = methyl beta-D-galactoside(in) + ADP + phosphate + H(+). In terms of biological role, part of the ABC transporter complex MglABC involved in galactose/methyl galactoside import. Responsible for energy coupling to the transport system. The chain is Galactose/methyl galactoside import ATP-binding protein MglA from Escherichia coli (strain K12).